Reading from the N-terminus, the 445-residue chain is Argininosuccinate synthase (445 aa).

ATP is bound by residues 17 to 25 and Ala43; that span reads AFSGGLDTS. Tyr99 lines the L-citrulline pocket. ATP is bound by residues Gly129 and Thr131. Thr131, Asn135, and Asp136 together coordinate L-aspartate. An L-citrulline-binding site is contributed by Asn135. Asp136 provides a ligand contact to ATP. L-citrulline contacts are provided by Arg139 and Ser192. Residue Asp194 participates in ATP binding. The L-citrulline site is built by Thr201, Glu203, and Glu280.

This sequence belongs to the argininosuccinate synthase family. Type 2 subfamily. Homotetramer.

It is found in the cytoplasm. The catalysed reaction is L-citrulline + L-aspartate + ATP = 2-(N(omega)-L-arginino)succinate + AMP + diphosphate + H(+). It functions in the pathway amino-acid biosynthesis; L-arginine biosynthesis; L-arginine from L-ornithine and carbamoyl phosphate: step 2/3. This Rhodopseudomonas palustris (strain ATCC BAA-98 / CGA009) protein is Argininosuccinate synthase.